The primary structure comprises 142 residues: MTRRPSNLDPAIAARLKRDEHGLFPAVAQQYDTGEVLMVGWMDDEALHRTLTTGRCTYWSRSRQEYWVKGETSGHQQWVKSVALDCDGDTVLVKVDQIGAACHTGDRTCFDAGQLPAVVGEPPTPVGAGERQPASGTADAAP.

Residue Asp85 coordinates Mg(2+). Zn(2+) is bound at residue Cys86. 2 residues coordinate Mg(2+): Asp87 and Asp89. Zn(2+)-binding residues include Cys102 and Cys109. Positions 120-142 are disordered; the sequence is GEPPTPVGAGERQPASGTADAAP.

The protein belongs to the PRA-CH family. In terms of assembly, homodimer. Mg(2+) serves as cofactor. It depends on Zn(2+) as a cofactor.

It localises to the cytoplasm. The catalysed reaction is 1-(5-phospho-beta-D-ribosyl)-5'-AMP + H2O = 1-(5-phospho-beta-D-ribosyl)-5-[(5-phospho-beta-D-ribosylamino)methylideneamino]imidazole-4-carboxamide. It functions in the pathway amino-acid biosynthesis; L-histidine biosynthesis; L-histidine from 5-phospho-alpha-D-ribose 1-diphosphate: step 3/9. Catalyzes the hydrolysis of the adenine ring of phosphoribosyl-AMP. The sequence is that of Phosphoribosyl-AMP cyclohydrolase from Acidothermus cellulolyticus (strain ATCC 43068 / DSM 8971 / 11B).